The following is a 120-amino-acid chain: Large ribosomal subunit protein uL18 (120 aa).

The protein belongs to the universal ribosomal protein uL18 family. Part of the 50S ribosomal subunit; part of the 5S rRNA/L5/L18/L25 subcomplex. Contacts the 5S and 23S rRNAs.

This is one of the proteins that bind and probably mediate the attachment of the 5S RNA into the large ribosomal subunit, where it forms part of the central protuberance. The polypeptide is Large ribosomal subunit protein uL18 (Rhizobium etli (strain ATCC 51251 / DSM 11541 / JCM 21823 / NBRC 15573 / CFN 42)).